Here is a 185-residue protein sequence, read N- to C-terminus: Fimbrial subunit type 1 (185 aa).

Residues 1 to 22 form the signal peptide; that stretch reads MRHKLMTSTIASLMFVAAAAVA. A disulfide bridge connects residues Cys-46 and Cys-86.

This sequence belongs to the fimbrial protein family.

The protein resides in the fimbrium. This chain is Fimbrial subunit type 1, found in Salmonella typhimurium.